The chain runs to 671 residues: DNA ligase (671 aa).

Residues 32 to 36 (DVEYD), 81 to 82 (SL), and Glu-113 contribute to the NAD(+) site. Lys-115 functions as the N6-AMP-lysine intermediate in the catalytic mechanism. Residues Arg-136, Glu-173, Lys-290, and Lys-314 each contribute to the NAD(+) site. Residues Cys-408, Cys-411, Cys-426, and Cys-432 each contribute to the Zn(2+) site. The BRCT domain maps to 593–671 (EIDSPFAGKT…EAEMLRLLGS (79 aa)).

It belongs to the NAD-dependent DNA ligase family. LigA subfamily. It depends on Mg(2+) as a cofactor. The cofactor is Mn(2+).

The enzyme catalyses NAD(+) + (deoxyribonucleotide)n-3'-hydroxyl + 5'-phospho-(deoxyribonucleotide)m = (deoxyribonucleotide)n+m + AMP + beta-nicotinamide D-nucleotide.. Functionally, DNA ligase that catalyzes the formation of phosphodiester linkages between 5'-phosphoryl and 3'-hydroxyl groups in double-stranded DNA using NAD as a coenzyme and as the energy source for the reaction. It is essential for DNA replication and repair of damaged DNA. This Escherichia coli O17:K52:H18 (strain UMN026 / ExPEC) protein is DNA ligase.